Reading from the N-terminus, the 439-residue chain is tRNA modification GTPase MnmE (439 aa).

Residues arginine 20, glutamate 78, and lysine 116 each contribute to the (6S)-5-formyl-5,6,7,8-tetrahydrofolate site. Residues 211–364 (GIYVTILGEP…LLNLIKQKVE (154 aa)) form the TrmE-type G domain. GTP-binding positions include 221-226 (NSGKST), 240-246 (SEYAGTT), and 265-268 (DTAG). Residues serine 225 and threonine 246 each contribute to the Mg(2+) site. Lysine 439 serves as a coordination point for (6S)-5-formyl-5,6,7,8-tetrahydrofolate.

Belongs to the TRAFAC class TrmE-Era-EngA-EngB-Septin-like GTPase superfamily. TrmE GTPase family. In terms of assembly, homodimer. Heterotetramer of two MnmE and two MnmG subunits. K(+) serves as cofactor.

The protein localises to the cytoplasm. In terms of biological role, exhibits a very high intrinsic GTPase hydrolysis rate. Involved in the addition of a carboxymethylaminomethyl (cmnm) group at the wobble position (U34) of certain tRNAs, forming tRNA-cmnm(5)s(2)U34. The chain is tRNA modification GTPase MnmE from Ehrlichia chaffeensis (strain ATCC CRL-10679 / Arkansas).